A 152-amino-acid chain; its full sequence is Mid1-interacting protein 1A (152 aa).

Residues Ser-87–Glu-105 are compositionally biased toward basic and acidic residues. The disordered stretch occupies residues Ser-87–Asp-109.

The protein belongs to the SPOT14 family. Expressed for a short period in the cells that will produce the enveloping layer (EVL).

The protein localises to the nucleus. It is found in the cytoplasm. The protein resides in the cytoskeleton. Functionally, involved in stabilization of microtubules. May play a role in the regulation of lipogenesis. This is Mid1-interacting protein 1A (mid1ip1a) from Danio rerio (Zebrafish).